A 137-amino-acid polypeptide reads, in one-letter code: Lysozyme (137 aa).

The first 20 residues, 1–20, serve as a signal peptide directing secretion; it reads MQRLLGSIVILATVFTFCEA. In terms of domain architecture, I-type lysozyme spans 21–135; the sequence is TISSACLRCI…EKVHQQGCNV (115 aa). 6 cysteine pairs are disulfide-bonded: cysteine 26/cysteine 102, cysteine 31/cysteine 37, cysteine 42/cysteine 51, cysteine 64/cysteine 84, cysteine 74/cysteine 80, and cysteine 98/cysteine 116. Residue glutamate 34 is the Proton donor of the active site. The active-site Nucleophile is aspartate 45. 57–63 contributes to the substrate binding site; it reads KENYWED. Residues tyrosine 88 and 109–111 each bind substrate; that span reads HNG.

The protein belongs to the glycosyl hydrolase 22 family. Type-I lysozyme subfamily. In terms of tissue distribution, expressed in the basophil cells of the oyster digestive gland.

The protein localises to the secreted. The catalysed reaction is Hydrolysis of (1-&gt;4)-beta-linkages between N-acetylmuramic acid and N-acetyl-D-glucosamine residues in a peptidoglycan and between N-acetyl-D-glucosamine residues in chitodextrins.. Has bacteriolytic activity. May play a role in digestion and in the host defense mechanisms against invading microbes. This Magallana gigas (Pacific oyster) protein is Lysozyme (lysoz).